Reading from the N-terminus, the 278-residue chain is UPF0276 protein Sama_1305 (278 aa).

It belongs to the UPF0276 family.

The chain is UPF0276 protein Sama_1305 from Shewanella amazonensis (strain ATCC BAA-1098 / SB2B).